A 1235-amino-acid polypeptide reads, in one-letter code: ATP-dependent helicase/nuclease subunit A (1235 aa).

In terms of domain architecture, UvrD-like helicase ATP-binding spans 3-471 (TKWTETQKSA…IKLSENFRSR (469 aa)). 24 to 31 (AGAGTGKT) contributes to the ATP binding site. The 300-residue stretch at 509 to 808 (PFEGNCGGDV…RIMSIHKSKG (300 aa)) folds into the UvrD-like helicase C-terminal domain.

The protein belongs to the helicase family. AddA subfamily. In terms of assembly, heterodimer of AddA and AddB/RexB. Requires Mg(2+) as cofactor.

The catalysed reaction is Couples ATP hydrolysis with the unwinding of duplex DNA by translocating in the 3'-5' direction.. It catalyses the reaction ATP + H2O = ADP + phosphate + H(+). Functionally, the heterodimer acts as both an ATP-dependent DNA helicase and an ATP-dependent, dual-direction single-stranded exonuclease. Recognizes the chi site generating a DNA molecule suitable for the initiation of homologous recombination. The AddA nuclease domain is required for chi fragment generation; this subunit has the helicase and 3' -&gt; 5' nuclease activities. This Clostridium kluyveri (strain ATCC 8527 / DSM 555 / NBRC 12016 / NCIMB 10680 / K1) protein is ATP-dependent helicase/nuclease subunit A.